The chain runs to 145 residues: Basic phospholipase A2 cL037 (145 aa).

The N-terminal stretch at 1 to 21 (MYPAHLLVLLAVCVSLLGASA) is a signal peptide. The propeptide occupies 22–27 (ILPLPL). 7 disulfide bridges follow: C38/C98, C54/C144, C56/C72, C71/C125, C78/C118, C87/C111, and C105/C116. Positions 55, 57, and 59 each coordinate Ca(2+). H75 is a catalytic residue. D76 provides a ligand contact to Ca(2+). Residue D119 is part of the active site.

This sequence belongs to the phospholipase A2 family. Group I subfamily. D49 sub-subfamily. It depends on Ca(2+) as a cofactor. In terms of tissue distribution, expressed by the venom gland.

It localises to the secreted. The catalysed reaction is a 1,2-diacyl-sn-glycero-3-phosphocholine + H2O = a 1-acyl-sn-glycero-3-phosphocholine + a fatty acid + H(+). PLA2 catalyzes the calcium-dependent hydrolysis of the 2-acyl groups in 3-sn-phosphoglycerides. The chain is Basic phospholipase A2 cL037 from Laticauda semifasciata (Black-banded sea krait).